Reading from the N-terminus, the 173-residue chain is Alpha-crystallin A chain (173 aa).

Met-1 is subject to N-acetylmethionine. A sHSP domain is found at 52 to 162 (LFRGFMDSGI…SHSERPIPVS (111 aa)). 4 residues coordinate Zn(2+): His-100, Glu-102, His-107, and His-154. Residues 146 to 173 (MMSGLDSSHSERPIPVSREEKPTSAPSS) form a disordered region. Positions 153–167 (SHSERPIPVSREEKP) are enriched in basic and acidic residues.

The protein belongs to the small heat shock protein (HSP20) family. In terms of assembly, heteropolymer composed of three CRYAA and one CRYAB subunits. Inter-subunit bridging via zinc ions enhances stability, which is crucial as there is no protein turn over in the lens. Can also form homodimers and homotetramers (dimers of dimers) which serve as the building blocks of homooligomers. Within homooligomers, the zinc-binding motif is created from residues of 3 different molecules. His-100 and Glu-102 from one molecule are ligands of the zinc ion, and His-107 and His-154 residues from additional molecules complete the site with tetrahedral coordination geometry.

It localises to the cytoplasm. The protein localises to the nucleus. In terms of biological role, contributes to the transparency and refractive index of the lens. May act as a chaperone, preventing aggregation of various proteins under a wide range of stress conditions. This Aquarana catesbeiana (American bullfrog) protein is Alpha-crystallin A chain (CRYAA).